We begin with the raw amino-acid sequence, 198 residues long: DnaJ homolog subfamily C member 12 (198 aa).

At Met1 the chain carries N-acetylmethionine. Positions Asp14–Arg79 constitute a J domain. The tract at residues Thr121–Gly183 is disordered. Over residues Asn126–Glu156 the composition is skewed to basic and acidic residues. A phosphoserine mark is found at Ser160, Ser166, and Ser182.

In terms of assembly, interacts with HSPA8. Interacts with TPH1. Interacts with TPH2.

The protein localises to the cytoplasm. Probable co-chaperone that participates in the proper folding of biopterin-dependent aromatic amino acid hydroxylases, which include phenylalanine-4-hydroxylase (PAH), tyrosine 3-monooxygenase (TH) and peripheral and neuronal tryptophan hydroxylases (TPH1 and TPH2). This is DnaJ homolog subfamily C member 12 (Dnajc12) from Rattus norvegicus (Rat).